Reading from the N-terminus, the 185-residue chain is Large ribosomal subunit protein uL6m (185 aa).

It belongs to the universal ribosomal protein uL6 family.

It is found in the mitochondrion. The polypeptide is Large ribosomal subunit protein uL6m (RPL6) (Reclinomonas americana).